Reading from the N-terminus, the 334-residue chain is Glycerol-3-phosphate dehydrogenase [NAD(P)+] (334 aa).

Residues serine 11, tryptophan 12, arginine 32, and lysine 106 each contribute to the NADPH site. Lysine 106 and glycine 136 together coordinate sn-glycerol 3-phosphate. Alanine 140 provides a ligand contact to NADPH. Lysine 191, aspartate 244, serine 254, arginine 255, and asparagine 256 together coordinate sn-glycerol 3-phosphate. The Proton acceptor role is filled by lysine 191. Arginine 255 is an NADPH binding site. Positions 279 and 281 each coordinate NADPH.

This sequence belongs to the NAD-dependent glycerol-3-phosphate dehydrogenase family.

The protein localises to the cytoplasm. It carries out the reaction sn-glycerol 3-phosphate + NAD(+) = dihydroxyacetone phosphate + NADH + H(+). The catalysed reaction is sn-glycerol 3-phosphate + NADP(+) = dihydroxyacetone phosphate + NADPH + H(+). It participates in membrane lipid metabolism; glycerophospholipid metabolism. Functionally, catalyzes the reduction of the glycolytic intermediate dihydroxyacetone phosphate (DHAP) to sn-glycerol 3-phosphate (G3P), the key precursor for phospholipid synthesis. This is Glycerol-3-phosphate dehydrogenase [NAD(P)+] from Parafrankia sp. (strain EAN1pec).